The chain runs to 396 residues: Phosphopentomutase (396 aa).

Asp13, Asp288, His293, Asp329, His330, and His341 together coordinate Mn(2+).

It belongs to the phosphopentomutase family. Requires Mn(2+) as cofactor.

It localises to the cytoplasm. It catalyses the reaction 2-deoxy-alpha-D-ribose 1-phosphate = 2-deoxy-D-ribose 5-phosphate. It carries out the reaction alpha-D-ribose 1-phosphate = D-ribose 5-phosphate. The protein operates within carbohydrate degradation; 2-deoxy-D-ribose 1-phosphate degradation; D-glyceraldehyde 3-phosphate and acetaldehyde from 2-deoxy-alpha-D-ribose 1-phosphate: step 1/2. Functionally, isomerase that catalyzes the conversion of deoxy-ribose 1-phosphate (dRib-1-P) and ribose 1-phosphate (Rib-1-P) to deoxy-ribose 5-phosphate (dRib-5-P) and ribose 5-phosphate (Rib-5-P), respectively. The sequence is that of Phosphopentomutase from Clostridium perfringens (strain 13 / Type A).